The chain runs to 215 residues: 3-isopropylmalate dehydratase small subunit (215 aa).

The protein belongs to the LeuD family. LeuD type 1 subfamily. In terms of assembly, heterodimer of LeuC and LeuD.

It carries out the reaction (2R,3S)-3-isopropylmalate = (2S)-2-isopropylmalate. The protein operates within amino-acid biosynthesis; L-leucine biosynthesis; L-leucine from 3-methyl-2-oxobutanoate: step 2/4. Catalyzes the isomerization between 2-isopropylmalate and 3-isopropylmalate, via the formation of 2-isopropylmaleate. The protein is 3-isopropylmalate dehydratase small subunit of Xanthomonas axonopodis pv. citri (strain 306).